The sequence spans 75 residues: Small ribosomal subunit protein bS21A (75 aa).

Belongs to the bacterial ribosomal protein bS21 family.

This chain is Small ribosomal subunit protein bS21A (rpsU1), found in Agrobacterium fabrum (strain C58 / ATCC 33970) (Agrobacterium tumefaciens (strain C58)).